A 319-amino-acid polypeptide reads, in one-letter code: Phosphate acyltransferase (319 aa).

Belongs to the PlsX family. As to quaternary structure, homodimer. Probably interacts with PlsY.

Its subcellular location is the cytoplasm. It catalyses the reaction a fatty acyl-[ACP] + phosphate = an acyl phosphate + holo-[ACP]. The protein operates within lipid metabolism; phospholipid metabolism. Functionally, catalyzes the reversible formation of acyl-phosphate (acyl-PO(4)) from acyl-[acyl-carrier-protein] (acyl-ACP). This enzyme utilizes acyl-ACP as fatty acyl donor, but not acyl-CoA. This is Phosphate acyltransferase from Chlamydia muridarum (strain MoPn / Nigg).